The following is a 436-amino-acid chain: Protein arginine methyltransferase NDUFAF7, mitochondrial (436 aa).

The transit peptide at 1 to 41 (MNALVRRCVARTGIPSIWRRKCFSSGNEPAESNHVTPMLRH) directs the protein to the mitochondrion. Residues 413–436 (QGGKACQSEAPSTSVPGFDELVWH) form a disordered region.

Belongs to the NDUFAF7 family. As to quaternary structure, interacts with NDUFS2.

It is found in the mitochondrion. The catalysed reaction is L-arginyl-[protein] + 2 S-adenosyl-L-methionine = N(omega),N(omega)'-dimethyl-L-arginyl-[protein] + 2 S-adenosyl-L-homocysteine + 2 H(+). Arginine methyltransferase involved in the assembly or stability of mitochondrial NADH:ubiquinone oxidoreductase complex (complex I). Acts by mediating symmetric dimethylation of 'Arg-118' of NDUFS2 after it assembles into the complex I, stabilizing the early intermediate complex. This is Protein arginine methyltransferase NDUFAF7, mitochondrial from Rattus norvegicus (Rat).